The primary structure comprises 1108 residues: Eukaryotic translation initiation factor 2-alpha kinase 3 (1108 aa).

The N-terminal stretch at 1–27 (MERATQPRPRALLLLFLLLGCAAGISA) is a signal peptide. Residues 28–506 (VARARSLLAP…HYSKNIRKKD (479 aa)) lie on the Lumenal side of the membrane. The disordered stretch occupies residues 71–92 (EALPAASGEQESRATESDDDVE). A glycan (N-linked (GlcNAc...) asparagine) is linked at Asn253. Residues 507–527 (PILLLHWWKEIFGTILLCIVA) traverse the membrane as a helical segment. At 528-1108 (TTFIVRRLFH…SSTFSPLPGN (581 aa)) the chain is on the cytoplasmic side. The disordered stretch occupies residues 542-563 (RQRKESETQCQTESKYDSVSAD). A Protein kinase domain is found at 585-1069 (FEPIQCMGRG…ATDIIENAVF (485 aa)). 591-599 (MGRGGFGVV) lines the ATP pocket. Tyr611 is subject to Phosphotyrosine; by autocatalysis. Lys614 is a binding site for ATP. Residues 639–880 (EHPGIVRYFN…SPKVYLYIQM (242 aa)) are insert loop. A Phosphoserine modification is found at Ser707. Disordered regions lie at residues 772–818 (DEGH…RMNR) and 832–856 (FKHSSSRSSSEATLSTSPTRPTTLS). Polar residues predominate over residues 785–798 (SPYTRSREGTSSSI). Thr794 is subject to Phosphothreonine. The segment covering 837-856 (SRSSSEATLSTSPTRPTTLS) has biased composition (low complexity). The active-site Proton acceptor is the Asp929. Thr974 is subject to Phosphothreonine. The tract at residues 1080–1108 (LRQRSRSLSSSGTKHSRQPSSTFSPLPGN) is disordered. Ser1086 is modified (phosphoserine). Over residues 1097–1108 (QPSSTFSPLPGN) the composition is skewed to polar residues.

The protein belongs to the protein kinase superfamily. Ser/Thr protein kinase family. GCN2 subfamily. In terms of assembly, forms dimers with HSPA5/BIP in resting cells. Homotetramerizes in response to endoplasmic reticulum (ER) stress, leading to its activation. Interacts with HSP90B1/GRP94. Interacts with DNAJC3; inhibiting EIF2AK3/PERK activity. Interacts with ATAD3A; ATAD3A and EIF2S1/eIF-2-alpha occupy a common binding site within the cytoplasmic loop of EIF2AK3/PERK, leading to prevent EIF2AK3/PERK association with its substrate EIF2S1/eIF-2-alpha. Interacts with MFN2. Interacts with TMEM33. Interacts with PDIA6. Interacts with LACC1. Oligomerization of the N-terminal ER luminal domain by ER stress promotes EIF2AK3/PERK trans-autophosphorylation of the C-terminal cytoplasmic kinase domain at multiple residues including Thr-974 on the kinase activation loop. Autophosphorylated at Tyr-611 following endoplasmic reticulum stress, leading to activate its activity. Dephosphorylated at Tyr-611 by PTPN1/PTP1B, leading to inactivate its enzyme activity. Phosphorylation at Thr-794 by AKT (AKT1, AKT2 and/or AKT3) inactivates EIF2AK3/PERK. In terms of processing, ADP-ribosylated by PARP16 upon ER stress, which increases kinase activity. Ubiquitous.

The protein localises to the endoplasmic reticulum membrane. The enzyme catalyses L-seryl-[protein] + ATP = O-phospho-L-seryl-[protein] + ADP + H(+). It catalyses the reaction L-threonyl-[protein] + ATP = O-phospho-L-threonyl-[protein] + ADP + H(+). The catalysed reaction is L-tyrosyl-[protein] + ATP = O-phospho-L-tyrosyl-[protein] + ADP + H(+). Its activity is regulated as follows. Inhibited by HSPA5/BIP in absence of stress. Perturbation in protein folding in the endoplasmic reticulum (ER) promotes reversible dissociation from HSPA5/BIP and oligomerization, resulting in trans-autophosphorylation and kinase activity induction. Inactivated following phosphorylation at Thr-794 by AKT (AKT1, AKT2 and/or AKT3). Inhibited by ATAD3A at mitochondria-endoplasmic reticulum contact sites, providing a safe haven for mitochondrial protein translation during ER stress. Functionally, metabolic-stress sensing protein kinase that phosphorylates the alpha subunit of eukaryotic translation initiation factor 2 (EIF2S1/eIF-2-alpha) in response to various stress, such as unfolded protein response (UPR). Key effector of the integrated stress response (ISR) to unfolded proteins: EIF2AK3/PERK specifically recognizes and binds misfolded proteins, leading to its activation and EIF2S1/eIF-2-alpha phosphorylation. EIF2S1/eIF-2-alpha phosphorylation in response to stress converts EIF2S1/eIF-2-alpha in a global protein synthesis inhibitor, leading to a global attenuation of cap-dependent translation, while concomitantly initiating the preferential translation of ISR-specific mRNAs, such as the transcriptional activators ATF4 and QRICH1, and hence allowing ATF4- and QRICH1-mediated reprogramming. The EIF2AK3/PERK-mediated unfolded protein response increases mitochondrial oxidative phosphorylation by promoting ATF4-mediated expression of COX7A2L/SCAF1, thereby increasing formation of respiratory chain supercomplexes. In contrast to most subcellular compartments, mitochondria are protected from the EIF2AK3/PERK-mediated unfolded protein response due to EIF2AK3/PERK inhibition by ATAD3A at mitochondria-endoplasmic reticulum contact sites. In addition to EIF2S1/eIF-2-alpha, also phosphorylates NFE2L2/NRF2 in response to stress, promoting release of NFE2L2/NRF2 from the BCR(KEAP1) complex, leading to nuclear accumulation and activation of NFE2L2/NRF2. Serves as a critical effector of unfolded protein response (UPR)-induced G1 growth arrest due to the loss of cyclin-D1 (CCND1). Involved in control of mitochondrial morphology and function. The sequence is that of Eukaryotic translation initiation factor 2-alpha kinase 3 (Eif2ak3) from Rattus norvegicus (Rat).